The primary structure comprises 382 residues: Sialidase (382 aa).

A substrate-binding site is contributed by R37. A disulfide bridge connects residues C42 and C103. The active-site Proton acceptor is the D62. 3 BNR repeats span residues 71 to 82 (ARSTDGGKTWNK), 145 to 156 (YKSTDDGVTFSK), and 210 to 220 (IYSTDGITWSL). R246 is a binding site for substrate. One copy of the BNR 4 repeat lies at 254–265 (FETKDFGKTWTE). R309 contributes to the substrate binding site. The active-site Nucleophile is the Y342. The active site involves E361.

It belongs to the glycosyl hydrolase 33 family. In terms of assembly, monomer.

It carries out the reaction Hydrolysis of alpha-(2-&gt;3)-, alpha-(2-&gt;6)-, alpha-(2-&gt;8)- glycosidic linkages of terminal sialic acid residues in oligosaccharides, glycoproteins, glycolipids, colominic acid and synthetic substrates.. Its function is as follows. Cleaves the terminal sialic acid (N-acetyl neuraminic acid) from carbohydrate chains in glycoproteins providing free sialic acid which can be used as carbon and energy sources. Sialidases have been suggested to be pathogenic factors in microbial infections. The chain is Sialidase (nanH) from Salmonella typhimurium (strain LT2 / SGSC1412 / ATCC 700720).